The primary structure comprises 202 residues: NADH-quinone oxidoreductase subunit C (202 aa).

It belongs to the complex I 30 kDa subunit family. In terms of assembly, NDH-1 is composed of 14 different subunits. Subunits NuoB, C, D, E, F, and G constitute the peripheral sector of the complex.

It localises to the cell inner membrane. The catalysed reaction is a quinone + NADH + 5 H(+)(in) = a quinol + NAD(+) + 4 H(+)(out). In terms of biological role, NDH-1 shuttles electrons from NADH, via FMN and iron-sulfur (Fe-S) centers, to quinones in the respiratory chain. The immediate electron acceptor for the enzyme in this species is believed to be ubiquinone. Couples the redox reaction to proton translocation (for every two electrons transferred, four hydrogen ions are translocated across the cytoplasmic membrane), and thus conserves the redox energy in a proton gradient. The chain is NADH-quinone oxidoreductase subunit C from Bartonella henselae (strain ATCC 49882 / DSM 28221 / CCUG 30454 / Houston 1) (Rochalimaea henselae).